The chain runs to 338 residues: Ketol-acid reductoisomerase (NADP(+)) (338 aa).

The KARI N-terminal Rossmann domain occupies 1–181; that stretch reads MKVFYDKDCD…GGGKAGIIET (181 aa). Residues 24–27, Arg-47, and Ser-52 contribute to the NADP(+) site; that span reads YGSQ. The active site involves His-107. Residue Gly-133 participates in NADP(+) binding. The KARI C-terminal knotted domain maps to 182–327; it reads NFREETETDL…EKLRAMMPWI (146 aa). Mg(2+) is bound by residues Asp-190, Glu-194, Glu-226, and Glu-230. Ser-251 provides a ligand contact to substrate.

The protein belongs to the ketol-acid reductoisomerase family. Mg(2+) serves as cofactor.

The catalysed reaction is (2R)-2,3-dihydroxy-3-methylbutanoate + NADP(+) = (2S)-2-acetolactate + NADPH + H(+). It carries out the reaction (2R,3R)-2,3-dihydroxy-3-methylpentanoate + NADP(+) = (S)-2-ethyl-2-hydroxy-3-oxobutanoate + NADPH + H(+). The protein operates within amino-acid biosynthesis; L-isoleucine biosynthesis; L-isoleucine from 2-oxobutanoate: step 2/4. It functions in the pathway amino-acid biosynthesis; L-valine biosynthesis; L-valine from pyruvate: step 2/4. Its function is as follows. Involved in the biosynthesis of branched-chain amino acids (BCAA). Catalyzes an alkyl-migration followed by a ketol-acid reduction of (S)-2-acetolactate (S2AL) to yield (R)-2,3-dihydroxy-isovalerate. In the isomerase reaction, S2AL is rearranged via a Mg-dependent methyl migration to produce 3-hydroxy-3-methyl-2-ketobutyrate (HMKB). In the reductase reaction, this 2-ketoacid undergoes a metal-dependent reduction by NADPH to yield (R)-2,3-dihydroxy-isovalerate. The protein is Ketol-acid reductoisomerase (NADP(+)) of Polaromonas sp. (strain JS666 / ATCC BAA-500).